Reading from the N-terminus, the 299-residue chain is Probable lipid kinase YegS (299 aa).

One can recognise a DAGKc domain in the interval 2–133 (ADLPASLLIL…IDIAQVNKET (132 aa)). Residues Thr40, 66-72 (GDGTINE), and Thr95 contribute to the ATP site. Mg(2+)-binding residues include Leu215, Asp218, and Leu220. Residue Glu271 is the Proton acceptor of the active site.

This sequence belongs to the diacylglycerol/lipid kinase family. YegS lipid kinase subfamily. Mg(2+) is required as a cofactor. Ca(2+) serves as cofactor.

It is found in the cytoplasm. Functionally, probably phosphorylates lipids; the in vivo substrate is unknown. The chain is Probable lipid kinase YegS from Escherichia fergusonii (strain ATCC 35469 / DSM 13698 / CCUG 18766 / IAM 14443 / JCM 21226 / LMG 7866 / NBRC 102419 / NCTC 12128 / CDC 0568-73).